Reading from the N-terminus, the 200-residue chain is dTTP/UTP pyrophosphatase (200 aa).

The active-site Proton acceptor is Asp-81.

This sequence belongs to the Maf family. YhdE subfamily. A divalent metal cation is required as a cofactor.

Its subcellular location is the cytoplasm. It carries out the reaction dTTP + H2O = dTMP + diphosphate + H(+). The enzyme catalyses UTP + H2O = UMP + diphosphate + H(+). In terms of biological role, nucleoside triphosphate pyrophosphatase that hydrolyzes dTTP and UTP. May have a dual role in cell division arrest and in preventing the incorporation of modified nucleotides into cellular nucleic acids. This chain is dTTP/UTP pyrophosphatase, found in Albidiferax ferrireducens (strain ATCC BAA-621 / DSM 15236 / T118) (Rhodoferax ferrireducens).